Reading from the N-terminus, the 125-residue chain is Snaclec coagulation factor IX/factor X-binding protein subunit B (125 aa).

Residues 1–122 form the C-type lectin domain; sequence DCSSGWTAYG…SLFGHFVCKS (122 aa). Disulfide bonds link Cys-2-Cys-13, Cys-30-Cys-120, and Cys-97-Cys-112. The Ca(2+) site is built by Ser-41 and Glu-47.

This sequence belongs to the snaclec family. As to quaternary structure, heterodimer of subunits A and B; disulfide-linked. As to expression, expressed by the venom gland.

Its subcellular location is the secreted. Functionally, anticoagulant protein which binds to coagulation factor IX (F9) and coagulation factor X (F10) in the presence of calcium. It may bind the gamma-carboxyglutamic acid-domain regions of factors with a 1 to 1 stoichiometry. The dissociation constant (K(d)) are 6.6 nM for factor IX (F9) and 125 nM for factor X (F10). Does not bind carbohydrates. The sequence is that of Snaclec coagulation factor IX/factor X-binding protein subunit B from Echis carinatus (Saw-scaled viper).